The following is a 151-amino-acid chain: Large ribosomal subunit protein uL15 (151 aa).

A disordered region spans residues 1–51 (MKSLRLEDAVPQSGSRHRKLRVGRGHSAGQGKTSGRGMRGQKCRSGGGVRP). Residues 15 to 24 (SRHRKLRVGR) are compositionally biased toward basic residues. A compositionally biased stretch (gly residues) spans 26–38 (HSAGQGKTSGRGM).

This sequence belongs to the universal ribosomal protein uL15 family. Part of the 50S ribosomal subunit.

Its function is as follows. Binds to the 23S rRNA. In Gloeobacter violaceus (strain ATCC 29082 / PCC 7421), this protein is Large ribosomal subunit protein uL15.